We begin with the raw amino-acid sequence, 238 residues long: Lactate utilization protein A (238 aa).

This sequence belongs to the LutA/YkgE family.

In terms of biological role, is involved in L-lactate degradation and allows cells to grow with lactate as the sole carbon source. The chain is Lactate utilization protein A from Geobacillus sp. (strain WCH70).